Consider the following 415-residue polypeptide: 3-isopropylmalate dehydratase large subunit (415 aa).

C297, C355, and C358 together coordinate [4Fe-4S] cluster.

The protein belongs to the aconitase/IPM isomerase family. LeuC type 2 subfamily. Heterodimer of LeuC and LeuD. The cofactor is [4Fe-4S] cluster.

The enzyme catalyses (2R,3S)-3-isopropylmalate = (2S)-2-isopropylmalate. It functions in the pathway amino-acid biosynthesis; L-leucine biosynthesis; L-leucine from 3-methyl-2-oxobutanoate: step 2/4. Catalyzes the isomerization between 2-isopropylmalate and 3-isopropylmalate, via the formation of 2-isopropylmaleate. This Caldivirga maquilingensis (strain ATCC 700844 / DSM 13496 / JCM 10307 / IC-167) protein is 3-isopropylmalate dehydratase large subunit.